The sequence spans 260 residues: Homeobox protein CDX-1 (260 aa).

The segment at residues 149–208 (KDKYRVVYTDHQRLELEKEFHYSRYITIRRKAELAAALGLTERQVKIWFQNRRAKERKVN) is a DNA-binding region (homeobox). Residues 152–173 (YRVVYTDHQRLELEKEFHYSRY) are interaction with DNA. Residues 191–202 (RQVKIWFQNRRA) are interaction with 5-mCpG DNA. The segment at 204–260 (ERKVNKKKLQQQSQPTSTTTPTPPAVGTPGPMGTLCSGSAPSLVSSSPLTIKEEFMP) is disordered. Composition is skewed to low complexity over residues 213 to 223 (QQQSQPTSTTT) and 240 to 252 (SGSA…SSPL).

It belongs to the Caudal homeobox family.

It is found in the nucleus. Plays a role in transcriptional regulation. Involved in activated KRAS-mediated transcriptional activation of PRKD1. Binds to the PRKD1 promoter. Could play a role in the terminal differentiation of the intestine. Binds preferentially to methylated DNA. The sequence is that of Homeobox protein CDX-1 (CDX1) from Gallus gallus (Chicken).